The chain runs to 339 residues: MAGRVKIKQKELIDSTVKNKNVMNLFHEIIGSKGNINFSVVWPKFKKIKQSVYDYISTLSVLEKASVMQNFEDDKKMLELFVQKLWAAYEGYFKYPEIEKYEVEGQVNFNQVPHYVLEKFSQLYRSRINSELVTLILNSCAFLSKYNDYILKKDPYILTITPGLCFSPIPNFEDLNFKYLYNSDKNSQHDKDFIMFILYKLYTAALGVYNAISIPDIDVEDLENIILSSVSQIKKQIPRCKDAFNKIESSVHLLRKNFNTYYSDYVGSGYNPTIIMEQYIKDISQDSKNISPRISYQFRTIIKYYRDMIATKHQTMDPQVLNLVKHVEKKLDMLDREKN.

It belongs to the asfivirus H339R family. In terms of assembly, interacts with NACA (alpha chain of nascent polypeptide-associated complex).

Its subcellular location is the host cytoplasm. It is found in the host nucleus. The protein resides in the virion. The sequence is that of Protein H339R from Ornithodoros (relapsing fever ticks).